We begin with the raw amino-acid sequence, 658 residues long: DNA mismatch repair protein MutL (658 aa).

Positions 114–130 are enriched in basic and acidic residues; it reads RQEDSSHATQVKAEDGK. Disordered stretches follow at residues 114–138 and 353–405; these read RQED…TAAA and PMPS…HSLS. The segment covering 361–372 has biased composition (polar residues); sequence ENLFDSASNHPT.

This sequence belongs to the DNA mismatch repair MutL/HexB family.

Its function is as follows. This protein is involved in the repair of mismatches in DNA. It is required for dam-dependent methyl-directed DNA mismatch repair. May act as a 'molecular matchmaker', a protein that promotes the formation of a stable complex between two or more DNA-binding proteins in an ATP-dependent manner without itself being part of a final effector complex. This Neisseria gonorrhoeae (strain NCCP11945) protein is DNA mismatch repair protein MutL.